The following is a 368-amino-acid chain: Cyclic GMP-AMP synthase-like receptor (368 aa).

ATP contacts are provided by residues Ser60 and 72-74 (EYD). The Mg(2+) site is built by Glu72, Asp74, and Asp190. Residues Asp190 and 229 to 236 (RASFYRQE) contribute to the GTP site. Residues 233–236 (YRQE), Lys254, and 268–272 (SYFIK) contribute to the ATP site.

Belongs to the mab-21 family. Mg(2+) is required as a cofactor. Mn(2+) serves as cofactor.

It carries out the reaction GTP + ATP = 3',2'-cGAMP + 2 diphosphate. The catalysed reaction is GTP + ATP = pppA(2'-5')pG + diphosphate. The enzyme catalyses pppA(2'-5')pG = 3',2'-cGAMP + diphosphate. Its activity is regulated as follows. The enzyme activity is specifically activated by double-stranded RNA (dsRNA). Nucleotidyltransferase that catalyzes the formation of cyclic GMP-AMP (3',2'-cGAMP) from ATP and GTP and plays a key role in innate immunity. Synthesizes 3',2'-cGAMP in a two-step reaction through production of the linear intermediate pppA(2'-5')pG. Acts as a key sensor of double-stranded RNA (dsRNA), the presence of dsRNA in the cytoplasm being a danger signal that triggers the immune responses. Directly binds dsRNA, activating the nucleotidyltransferase activity, leading to synthesis of 3',2'-cGAMP, a second messenger that binds to and activates Sting, thereby triggering the antiviral immune response via activation of the NF-kappa-B transcription factor Rel (Relish). This chain is Cyclic GMP-AMP synthase-like receptor, found in Lucilia cuprina (Green bottle fly).